Here is a 203-residue protein sequence, read N- to C-terminus: Holliday junction branch migration complex subunit RuvA (203 aa).

A domain I region spans residues 1 to 61; sequence MIIYKYGKIM…EYTKVTYGFD (61 aa). Residues 62-139 are domain II; the sequence is NFKELVIFED…KFMKKLTSDE (78 aa). Residues 140–147 form a flexible linker region; that stretch reads AAKIKVPA. The tract at residues 147-203 is domain III; that stretch reads ASSENENKFLDTMKMLGFKQQQIKFALDKIELNDDIETCVENAIKLISQQQHETSRV.

It belongs to the RuvA family. In terms of assembly, homotetramer. Forms an RuvA(8)-RuvB(12)-Holliday junction (HJ) complex. HJ DNA is sandwiched between 2 RuvA tetramers; dsDNA enters through RuvA and exits via RuvB. An RuvB hexamer assembles on each DNA strand where it exits the tetramer. Each RuvB hexamer is contacted by two RuvA subunits (via domain III) on 2 adjacent RuvB subunits; this complex drives branch migration. In the full resolvosome a probable DNA-RuvA(4)-RuvB(12)-RuvC(2) complex forms which resolves the HJ.

It is found in the cytoplasm. In terms of biological role, the RuvA-RuvB-RuvC complex processes Holliday junction (HJ) DNA during genetic recombination and DNA repair, while the RuvA-RuvB complex plays an important role in the rescue of blocked DNA replication forks via replication fork reversal (RFR). RuvA specifically binds to HJ cruciform DNA, conferring on it an open structure. The RuvB hexamer acts as an ATP-dependent pump, pulling dsDNA into and through the RuvAB complex. HJ branch migration allows RuvC to scan DNA until it finds its consensus sequence, where it cleaves and resolves the cruciform DNA. The protein is Holliday junction branch migration complex subunit RuvA of Metamycoplasma arthritidis (strain 158L3-1) (Mycoplasma arthritidis).